Here is a 553-residue protein sequence, read N- to C-terminus: ATP synthase F(1) complex subunit alpha, mitochondrial (553 aa).

Residues 1–43 (MLSVRIAAAVARALPRRAGLVSKNALGSSFVGTRNLHASNTRL) constitute a mitochondrion transit peptide. Phosphoserine occurs at positions 53 and 65. Serine 76 carries the phosphoserine; alternate modification. Serine 76 is a glycosylation site (O-linked (GlcNAc) serine; alternate). Serine 106 bears the Phosphoserine mark. An N6-acetyllysine mark is found at lysine 123, lysine 126, and lysine 132. The residue at position 134 (threonine 134) is a Phosphothreonine. Lysine 161 carries the post-translational modification N6-acetyllysine; alternate. Lysine 161 is subject to N6-succinyllysine; alternate. Phosphoserine is present on serine 166. Lysine 167 is subject to N6-acetyllysine; alternate. N6-succinyllysine; alternate is present on lysine 167. Serine 184 carries the post-translational modification Phosphoserine. Arginine 204 is modified (omega-N-methylarginine). ATP is bound by residues glutamine 215, glycine 217, lysine 218, threonine 219, and serine 220. Threonine 219 serves as a coordination point for Mg(2+). 2 positions are modified to N6-acetyllysine; alternate: lysine 230 and lysine 239. Residues lysine 230 and lysine 239 each carry the N6-succinyllysine; alternate modification. Lysine 240 is modified (N6-acetyllysine). Lysine 261 and lysine 305 each carry N6-acetyllysine; alternate. Lysine 261 and lysine 305 each carry N6-succinyllysine; alternate. Aspartate 312 is a binding site for Mg(2+). Position 427 is an N6-acetyllysine; alternate (lysine 427). Lysine 427 carries the N6-succinyllysine; alternate modification. Lysine 434 is subject to N6-acetyllysine. Residues glutamine 473 and glutamine 475 each contribute to the ATP site. Residues lysine 498, lysine 506, lysine 531, and lysine 539 each carry the N6-acetyllysine; alternate modification. An N6-succinyllysine; alternate mark is found at lysine 498, lysine 506, lysine 531, and lysine 539. Lysine 541 carries the N6-acetyllysine modification.

This sequence belongs to the ATPase alpha/beta chains family. As to quaternary structure, homotrimer. Component of the ATP synthase complex composed at least of ATP5F1A/subunit alpha, ATP5F1B/subunit beta, ATP5MC1/subunit c (homooctomer), MT-ATP6/subunit a, MT-ATP8/subunit 8, ATP5ME/subunit e, ATP5MF/subunit f, ATP5MG/subunit g, ATP5MK/subunit k, ATP5MJ/subunit j, ATP5F1C/subunit gamma, ATP5F1D/subunit delta, ATP5F1E/subunit epsilon, ATP5PF/subunit F6, ATP5PB/subunit b, ATP5PD/subunit d, ATP5PO/subunit OSCP. ATP synthase complex consists of a soluble F(1) head domain (subunits alpha(3) and beta(3)) - the catalytic core - and a membrane F(0) domain - the membrane proton channel (subunits c, a, 8, e, f, g, k and j). These two domains are linked by a central stalk (subunits gamma, delta, and epsilon) rotating inside the F1 region and a stationary peripheral stalk (subunits F6, b, d, and OSCP). Interacts with ATPAF2. Interacts with HRG; the interaction occurs on the surface of T-cells and alters the cell morphology when associated with concanavalin (in vitro). Interacts with PLG (angiostatin peptide); the interaction inhibits most of the angiogenic properties of angiostatin. Interacts with BLOC1S1. Interacts with BCL2L1 isoform BCL-X(L); the interaction mediates the association of BCL2L1 isoform BCL-X(L) with the mitochondrial membrane F(1)F(0) ATP synthase and enhances neurons metabolic efficiency. Interacts with CLN5 and PPT1. Interacts with S100A1; this interaction increases F1-ATPase activity. Interacts with ABCB7; this interaction allows the regulation of cellular iron homeostasis and cellular reactive oxygen species (ROS) levels in cardiomyocytes. Post-translationally, acetylated on lysine residues. BLOC1S1 is required for acetylation. In terms of tissue distribution, expressed in flagella of epididymal sperm.

Its subcellular location is the mitochondrion. It localises to the mitochondrion inner membrane. The protein resides in the cell membrane. Its function is as follows. Subunit alpha, of the mitochondrial membrane ATP synthase complex (F(1)F(0) ATP synthase or Complex V) that produces ATP from ADP in the presence of a proton gradient across the membrane which is generated by electron transport complexes of the respiratory chain. ATP synthase complex consist of a soluble F(1) head domain - the catalytic core - and a membrane F(1) domain - the membrane proton channel. These two domains are linked by a central stalk rotating inside the F(1) region and a stationary peripheral stalk. During catalysis, ATP synthesis in the catalytic domain of F(1) is coupled via a rotary mechanism of the central stalk subunits to proton translocation. In vivo, can only synthesize ATP although its ATP hydrolase activity can be activated artificially in vitro. With the catalytic subunit beta (ATP5F1B), forms the catalytic core in the F(1) domain. Subunit alpha does not bear the catalytic high-affinity ATP-binding sites. The polypeptide is ATP synthase F(1) complex subunit alpha, mitochondrial (Rattus norvegicus (Rat)).